Here is a 367-residue protein sequence, read N- to C-terminus: Glutamate 5-kinase (367 aa).

Position 10 (Lys-10) interacts with ATP. Substrate is bound by residues Ser-50, Asp-137, and Asn-149. Residues 169–170 (TD) and 211–217 (TGGMATK) each bind ATP. In terms of domain architecture, PUA spans 275–353 (AGEITVDDGA…QQISEILGYE (79 aa)).

This sequence belongs to the glutamate 5-kinase family.

The protein localises to the cytoplasm. The enzyme catalyses L-glutamate + ATP = L-glutamyl 5-phosphate + ADP. The protein operates within amino-acid biosynthesis; L-proline biosynthesis; L-glutamate 5-semialdehyde from L-glutamate: step 1/2. Catalyzes the transfer of a phosphate group to glutamate to form L-glutamate 5-phosphate. In Yersinia pseudotuberculosis serotype IB (strain PB1/+), this protein is Glutamate 5-kinase.